A 377-amino-acid chain; its full sequence is uncharacterized protein (377 aa).

Residues 1-46 (MLAGLRRRGSMTTPPGPEIPPPHQGGFYSAGHHPQRPWPETPPPKT) form a disordered region. 2 stretches are compositionally biased toward pro residues: residues 14–23 (PPGPEIPPPH) and 36–45 (RPWPETPPPK). A helical membrane pass occupies residues 53–73 (MLGAVALLAVVGVTVAVTLAV). The disordered stretch occupies residues 77 to 107 (DKRDAIPPGSGVSGSPTASDIASADDSGPVS).

The protein localises to the cell inner membrane. May be involved in the ESX-1 / type VII specialized secretion system (T7SS), which exports several proteins including EsxA and EsxB. Involved in DNA conjugation in the recipient strain. This is an uncharacterized protein from Mycolicibacterium smegmatis (strain MKD8) (Mycobacterium smegmatis).